The sequence spans 373 residues: Erythronate-4-phosphate dehydrogenase (373 aa).

Substrate contacts are provided by serine 45 and threonine 67. Residues aspartate 147, 206 to 208 (ASR), and aspartate 232 each bind NAD(+). Residue arginine 208 is part of the active site. Glutamate 237 is an active-site residue. Catalysis depends on histidine 254, which acts as the Proton donor. Glycine 257 lines the NAD(+) pocket. Tyrosine 258 is a substrate binding site.

It belongs to the D-isomer specific 2-hydroxyacid dehydrogenase family. PdxB subfamily. Homodimer.

Its subcellular location is the cytoplasm. It catalyses the reaction 4-phospho-D-erythronate + NAD(+) = (R)-3-hydroxy-2-oxo-4-phosphooxybutanoate + NADH + H(+). It functions in the pathway cofactor biosynthesis; pyridoxine 5'-phosphate biosynthesis; pyridoxine 5'-phosphate from D-erythrose 4-phosphate: step 2/5. Catalyzes the oxidation of erythronate-4-phosphate to 3-hydroxy-2-oxo-4-phosphonooxybutanoate. This is Erythronate-4-phosphate dehydrogenase from Tolumonas auensis (strain DSM 9187 / NBRC 110442 / TA 4).